We begin with the raw amino-acid sequence, 269 residues long: tRNA pseudouridine synthase A (269 aa).

Aspartate 51 serves as the catalytic Nucleophile. Residue tyrosine 109 coordinates substrate.

It belongs to the tRNA pseudouridine synthase TruA family. As to quaternary structure, homodimer.

The catalysed reaction is uridine(38/39/40) in tRNA = pseudouridine(38/39/40) in tRNA. Functionally, formation of pseudouridine at positions 38, 39 and 40 in the anticodon stem and loop of transfer RNAs. This is tRNA pseudouridine synthase A from Haemophilus influenzae (strain ATCC 51907 / DSM 11121 / KW20 / Rd).